The primary structure comprises 158 residues: SsrA-binding protein (158 aa).

Residues 131 to 158 are disordered; the sequence is GKKTHDKRETEKKRDWNREKARLLRDRG. Residues 136–158 are compositionally biased toward basic and acidic residues; that stretch reads DKRETEKKRDWNREKARLLRDRG.

The protein belongs to the SmpB family.

The protein localises to the cytoplasm. Its function is as follows. Required for rescue of stalled ribosomes mediated by trans-translation. Binds to transfer-messenger RNA (tmRNA), required for stable association of tmRNA with ribosomes. tmRNA and SmpB together mimic tRNA shape, replacing the anticodon stem-loop with SmpB. tmRNA is encoded by the ssrA gene; the 2 termini fold to resemble tRNA(Ala) and it encodes a 'tag peptide', a short internal open reading frame. During trans-translation Ala-aminoacylated tmRNA acts like a tRNA, entering the A-site of stalled ribosomes, displacing the stalled mRNA. The ribosome then switches to translate the ORF on the tmRNA; the nascent peptide is terminated with the 'tag peptide' encoded by the tmRNA and targeted for degradation. The ribosome is freed to recommence translation, which seems to be the essential function of trans-translation. This Brucella abortus biovar 1 (strain 9-941) protein is SsrA-binding protein.